The primary structure comprises 169 residues: NADH-quinone oxidoreductase subunit B (169 aa).

4 residues coordinate [4Fe-4S] cluster: cysteine 42, cysteine 43, cysteine 107, and cysteine 136.

It belongs to the complex I 20 kDa subunit family. In terms of assembly, NDH-1 is composed of 14 different subunits. Subunits NuoB, C, D, E, F, and G constitute the peripheral sector of the complex. [4Fe-4S] cluster is required as a cofactor.

The protein resides in the cell inner membrane. The catalysed reaction is a quinone + NADH + 5 H(+)(in) = a quinol + NAD(+) + 4 H(+)(out). In terms of biological role, NDH-1 shuttles electrons from NADH, via FMN and iron-sulfur (Fe-S) centers, to quinones in the respiratory chain. The immediate electron acceptor for the enzyme in this species is believed to be ubiquinone. Couples the redox reaction to proton translocation (for every two electrons transferred, four hydrogen ions are translocated across the cytoplasmic membrane), and thus conserves the redox energy in a proton gradient. This Helicobacter hepaticus (strain ATCC 51449 / 3B1) protein is NADH-quinone oxidoreductase subunit B.